The chain runs to 168 residues: Phosphopantetheine adenylyltransferase (168 aa).

Thr-13 provides a ligand contact to substrate. Residues 13–14 (TF) and His-21 contribute to the ATP site. 3 residues coordinate substrate: Lys-45, Leu-78, and Arg-92. ATP-binding positions include 93–95 (GLR), Glu-103, and 128–134 (TQFISSS).

It belongs to the bacterial CoaD family. Homohexamer. The cofactor is Mg(2+).

It localises to the cytoplasm. The catalysed reaction is (R)-4'-phosphopantetheine + ATP + H(+) = 3'-dephospho-CoA + diphosphate. Its pathway is cofactor biosynthesis; coenzyme A biosynthesis; CoA from (R)-pantothenate: step 4/5. Functionally, reversibly transfers an adenylyl group from ATP to 4'-phosphopantetheine, yielding dephospho-CoA (dPCoA) and pyrophosphate. This chain is Phosphopantetheine adenylyltransferase, found in Wolbachia pipientis wMel.